We begin with the raw amino-acid sequence, 700 residues long: Protein claret segregational (700 aa).

Ser-94 and Ser-96 each carry phosphoserine. Residues Ala-141 to Ala-185 are disordered. The span at Ala-149–Ala-185 shows a compositional bias: low complexity. Residues Lys-196–Arg-346 adopt a coiled-coil conformation. Residues Asn-348 to Cys-670 form the Kinesin motor domain. Gly-434–Thr-441 serves as a coordination point for ATP. A required for minus-end directionality region spans residues Ala-664 to Asn-668. Residues Leu-681–Lys-700 are disordered.

This sequence belongs to the TRAFAC class myosin-kinesin ATPase superfamily. Kinesin family. NCD subfamily.

It is found in the cytoplasm. Its subcellular location is the cytoskeleton. The enzyme catalyses ATP + H2O = ADP + phosphate + H(+). Functionally, minus-end-directed microtubule-based motor protein. Has ATPase activity. Required for normal chromosomal segregation in meiosis in females, and in early mitotic divisions of the embryo. The protein is Protein claret segregational (ncd) of Drosophila melanogaster (Fruit fly).